The primary structure comprises 132 residues: CLAVATA3/ESR (CLE)-related protein ESR2 (132 aa).

The signal sequence occupies residues 1–26 (MASRMGMVAIVSLFVCALVASTSVNA). The interval 68 to 132 (NRASKQLDSE…IGPPPFLDRY (65 aa)) is disordered. Hydroxyproline occurs at positions 82 and 85. Pro85 carries O-linked (Ara...) hydroxyproline glycosylation. Over residues 123–132 (IGPPPFLDRY) the composition is skewed to pro residues.

This sequence belongs to the CLV3/ESR signal peptide family. Post-translationally, the O-glycosylation (arabinosylation) of the hydroxyproline Pro-85 enhances binding affinity of the ESR2p peptide for its receptor. As to expression, seed endosperm.

The protein localises to the secreted. Its subcellular location is the extracellular space. In terms of biological role, extracellular signal peptide that regulates cell fate. This Zea mays (Maize) protein is CLAVATA3/ESR (CLE)-related protein ESR2.